An 855-amino-acid polypeptide reads, in one-letter code: Leucine--tRNA ligase (855 aa).

Residues 45–55 (PYPSGRLHMGH) carry the 'HIGH' region motif. The 'KMSKS' region signature appears at 619-623 (KMSKS). Lys622 is an ATP binding site.

It belongs to the class-I aminoacyl-tRNA synthetase family.

Its subcellular location is the cytoplasm. It catalyses the reaction tRNA(Leu) + L-leucine + ATP = L-leucyl-tRNA(Leu) + AMP + diphosphate. This chain is Leucine--tRNA ligase, found in Hyphomonas neptunium (strain ATCC 15444).